We begin with the raw amino-acid sequence, 538 residues long: Importin subunit alpha-4 (538 aa).

Residues Met1–Gln58 enclose the IBB domain. ARM repeat units lie at residues Ser112–Ser152, Ser155–Gly194, Pro197–Arg237, Lys239–Asp278, Asn281–Thr320, Asp323–Ala363, Lys366–Ser405, and His409–Lys448.

This sequence belongs to the importin alpha family. In terms of assembly, forms a complex with importin subunit beta-1. Interacts with A.tumefaciens VirD2 and VirE2.

The protein localises to the nucleus envelope. In terms of biological role, binds to conventional NLS motifs and mediates nuclear protein import across the nuclear envelope. Acts as a cellular receptor for the nuclear import of the virD2 protein of Agrobacterium and is essential for Agrobacterium-mediated root transformation. The polypeptide is Importin subunit alpha-4 (Arabidopsis thaliana (Mouse-ear cress)).